We begin with the raw amino-acid sequence, 97 residues long: Large ribosomal subunit protein bL27 (97 aa).

A disordered region spans residues 1–23; the sequence is MAHKKGASSSRNGRDSTSKRLGV.

This sequence belongs to the bacterial ribosomal protein bL27 family.

The chain is Large ribosomal subunit protein bL27 from Acidothermus cellulolyticus (strain ATCC 43068 / DSM 8971 / 11B).